A 321-amino-acid chain; its full sequence is MFHGIKGCMIPMYWWLLGDLDLNGVRNSASSYSGGVNLSKLAVGLDLSEPASSKWSSTTSVKFEVPGHYLLQTLYMCVRLTMTDGRYQRSGRISYNMQNSLLCSGNTHDSMVVLKQESRFAKATDQGLSHFSMQIEQGIPVVSNWLIFNRFKFVASKGVRFGPAFPLASLTGGSIVGDMTPYQAFAIGGLGSVRGYGEVAVGSGRSCLVANTELANKMTEGTIFLDCGTDLGSSRLVPVSSLYLLRTRTIKKLLRHENDKAVAELVSGNPSLRQGKPGFGYGFGYGLRFKSPLGHLQVDYAMNAFNQKTLYFGITNLASST.

It belongs to the OEP80 (TC 1.B.33.2) family. Expressed in germinating seeds.

The protein localises to the plastid. It localises to the chloroplast outer membrane. Functionally, may play a role during plastid development. This chain is Outer envelope protein 36, chloroplastic, found in Arabidopsis thaliana (Mouse-ear cress).